Here is a 113-residue protein sequence, read N- to C-terminus: Large ribosomal subunit protein bL17 (113 aa).

It belongs to the bacterial ribosomal protein bL17 family. In terms of assembly, part of the 50S ribosomal subunit. Contacts protein L32.

The polypeptide is Large ribosomal subunit protein bL17 (Symbiobacterium thermophilum (strain DSM 24528 / JCM 14929 / IAM 14863 / T)).